The following is a 1387-amino-acid chain: Collagen-like protein 6 (1387 aa).

N-linked (GlcNAc...) asparagine; by host glycosylation occurs at asparagine 6. Collagen-like domains follow at residues 95 to 154, 161 to 220, 266 to 325, 344 to 403, 450 to 508, and 512 to 751; these read GNNG…KGDI, GDKG…KGDN, GEKG…KGEM, GSKG…KGEK, IKGD…KGDI, and GEKG…SGSS. Disordered stretches follow at residues 98–219, 268–422, and 454–753; these read GNNG…DKGD, KGEI…QNQG, and KGEK…SSCQ. 8 stretches are compositionally biased toward basic and acidic residues: residues 114-181, 189-199, 207-219, 268-340, 364-382, 390-405, 454-535, and 544-747; these read IKGD…KGSK, SKGDNGDKGSK, SKGDKGNKGDKGD, KGEI…DGIK, KGDRGDKGDKGSKGDKGDN, SKGDKGDNGIKGEKGE, KGEK…KGDI, and KGEK…DKGE. Asparagine 794, asparagine 814, asparagine 819, asparagine 826, asparagine 846, asparagine 886, asparagine 894, asparagine 969, asparagine 1032, asparagine 1077, asparagine 1123, asparagine 1200, asparagine 1224, asparagine 1232, and asparagine 1233 each carry an N-linked (GlcNAc...) asparagine; by host glycan.

May be hydroxylated on lysine by the viral-encoded procollagen-lysine,2-oxoglutarate 5-dioxygenase.

The protein resides in the virion. May participate in the formation of a layer of cross-linked glycosylated fibrils at the viral surface thus giving it a hairy-like appearance. This Acanthamoeba polyphaga mimivirus (APMV) protein is Collagen-like protein 6.